Here is a 688-residue protein sequence, read N- to C-terminus: Phosphatidylinositol 4-phosphate 5-kinase type-1 gamma (688 aa).

Residues 48-71 (GQPGPGHGKKLGHRGVDASGETTY) are disordered. Residues 75–443 (TSSTLKGAIQ…RFFKFMSSTV (369 aa)) enclose the PIPK domain. N6-acetyllysine occurs at positions 265 and 268. At Arg-459 the chain carries Asymmetric dimethylarginine; alternate. The residue at position 459 (Arg-459) is an Omega-N-methylarginine; alternate. Positions 525-534 (TTLSSTSLSI) are enriched in low complexity. Disordered regions lie at residues 525 to 565 (TTLS…QEEL) and 592 to 629 (GAGV…EEDA). A Phosphoserine modification is found at Ser-554. Positions 602 to 623 (ASAAATVEVDAASQASEPASQA) are enriched in low complexity. Tyr-635 bears the Phosphotyrosine; by EGFR mark. Tyr-671 carries the post-translational modification Phosphotyrosine; by CSK. Ser-672 is subject to Phosphoserine; by CDK5, MAPK1 and CDK1. Phosphoserine occurs at positions 682 and 686. Thr-688 bears the Phosphothreonine mark.

Interacts with TLN1. Interacts with TLN2; interaction stimulates 1-phosphatidylinositol-4-phosphate 5-kinase activity. May compete with beta-integrins for the same binding site on TLN1 and TLN2. Interacts with ARF6; interaction stimulates 1-phosphatidylinositol-4-phosphate 5-kinase activity. Interacts with AP2B1. Interacts with AP2M1; phosphorylation of PIP5K1C by CSK disrupts the interaction; clathrin competes with PIP5K1C. Interacts with CDH1. Interacts with CSK. Interacts with PLCG1; interaction is abolished upon EGF stimulation. Interacts with LAPTM4B; promotes SNX5 association with LAPTM4B; kinase activity of PIP5K1C is required; interaction is regulated by phosphatidylinositol 4,5-bisphosphate generated by PIP5K1C. Post-translationally, phosphorylation on Ser-672 negatively regulates binding to TLN2 and is strongly stimulated in mitosis. Phosphorylation on Tyr-671 is necessary for targeting to focal adhesions. Phosphorylation on Ser-672 and Tyr-671 are mutually exclusive. Phosphorylated by SYK and CSK. Tyrosine phosphorylation is enhanced by PTK2 signaling. Phosphorylated at Tyr-635 upon EGF stimulation. Some studies suggest that phosphorylation on Tyr-671 enhances binding to tailins (TLN1 and TLN2); others that phosphorylation at Tyr-671 does not directly enhance binding to tailins (TLN1 and TLN2) but may act indirectly by inhibiting phosphorylation at Ser-672. In terms of processing, acetylation at Lys-265 and Lys-268 seems to decrease lipid kinase activity. Deacetylation of these sites by SIRT1 positively regulates the exocytosis of TSH-containing granules from pituitary cells.

It is found in the cell membrane. Its subcellular location is the endomembrane system. It localises to the cytoplasm. The protein resides in the cell junction. The protein localises to the focal adhesion. It is found in the adherens junction. Its subcellular location is the cell projection. It localises to the ruffle membrane. The protein resides in the phagocytic cup. The protein localises to the uropodium. It catalyses the reaction a 1,2-diacyl-sn-glycero-3-phospho-(1D-myo-inositol 4-phosphate) + ATP = a 1,2-diacyl-sn-glycero-3-phospho-(1D-myo-inositol-4,5-bisphosphate) + ADP + H(+). The enzyme catalyses 1-octadecanoyl-2-(5Z,8Z,11Z,14Z)-eicosatetraenoyl-sn-glycero-3-phospho-1D-myo-inositol 4-phosphate + ATP = 1-octadecanoyl-2-(5Z,8Z,11Z,14Z)-eicosatetraenoyl-sn-glycero-3-phospho-1D-myo-inositol 4,5-bisphosphate + ADP + H(+). The catalysed reaction is 1-octadecanoyl-2-(9Z)-octadecenoyl-sn-glycero-3-phospho-1D-myo-inositol 4-phosphate + ATP = 1-octadecanoyl-2-(9Z)-octadecenoyl-sn-glycero-3-phospho-1D-myo-inositol 4,5-bisphosphate + ADP + H(+). It carries out the reaction 1-octadecanoyl-2-(9Z)-octadecenoyl-sn-glycero-3-phospho-1D-myo-inositol + ATP = 1-octadecanoyl-2-(9Z)-octadecenoyl-sn-glycero-3-phospho-1D-myo-inositol 5-phosphate + ADP + H(+). It catalyses the reaction 1-octadecanoyl-2-(9Z,12Z)-octadecadienoyl-sn-glycero-3-phospho-1D-myo-inositol + ATP = 1-octadecanoyl-2-(9Z,12Z)-octadecadienoyl-sn-glycero-3-phospho-1D-myo-inositol 5-phosphate + ADP + H(+). The enzyme catalyses 1-octadecanoyl-2-(5Z,8Z,11Z,14Z-eicosatetraenoyl)-sn-glycero-3-phospho-(1D-myo-inositol) + ATP = 1-octadecanoyl-2-(5Z,8Z,11Z,14Z)-eicosatetraenoyl-sn-glycero-3-phospho-1D-myo-inositol 5-phosphate + ADP + H(+). The catalysed reaction is 1,2-di-(9Z,12Z)-octadecadienoyl-sn-glycero-3-phospho-1D-myo-inositol + ATP = 1,2-di(9Z,12Z)-octadecadienoyl-sn-glycero-3-phospho-1D-myo-inositol 5-phosphate + ADP + H(+). Its function is as follows. Catalyzes the phosphorylation of phosphatidylinositol 4-phosphate (PtdIns(4)P/PI4P) to form phosphatidylinositol 4,5-bisphosphate (PtdIns(4,5)P2/PIP2), a lipid second messenger that regulates several cellular processes such as signal transduction, vesicle trafficking, actin cytoskeleton dynamics, cell adhesion, and cell motility. PtdIns(4,5)P2 can directly act as a second messenger or can be utilized as a precursor to generate other second messengers: inositol 1,4,5-trisphosphate (IP3), diacylglycerol (DAG) or phosphatidylinositol-3,4,5-trisphosphate (PtdIns(3,4,5)P3/PIP3). PIP5K1A-mediated phosphorylation of PtdIns(4)P is the predominant pathway for PtdIns(4,5)P2 synthesis. Together with PIP5K1A, is required for phagocytosis, both enzymes regulating different types of actin remodeling at sequential steps. Promotes particle attachment by generating the pool of PtdIns(4,5)P2 that induces controlled actin depolymerization to facilitate Fc-gamma-R clustering. Mediates RAC1-dependent reorganization of actin filaments. Required for synaptic vesicle transport. Controls the plasma membrane pool of PtdIns(4,5)P2 implicated in synaptic vesicle endocytosis and exocytosis. Plays a role in endocytosis mediated by clathrin and AP-2 (adaptor protein complex 2). Required for clathrin-coated pits assembly at the synapse. Participates in cell junction assembly. Modulates adherens junctions formation by facilitating CDH1/cadherin trafficking. Required for focal adhesion dynamics. Modulates the targeting of talins (TLN1 and TLN2) to the plasma membrane and their efficient assembly into focal adhesions. Regulates the interaction between talins (TLN1 and TLN2) and beta-integrins. Required for uropodium formation and retraction of the cell rear during directed migration. Has a role in growth factor-stimulated directional cell migration and adhesion. Required for talin assembly into nascent adhesions forming at the leading edge toward the direction of the growth factor. Negative regulator of T-cell activation and adhesion. Negatively regulates integrin alpha-L/beta-2 (LFA-1) polarization and adhesion induced by T-cell receptor. Together with PIP5K1A has a role during embryogenesis and together with PIP5K1B may have a role immediately after birth. The sequence is that of Phosphatidylinositol 4-phosphate 5-kinase type-1 gamma from Rattus norvegicus (Rat).